Consider the following 557-residue polypeptide: Prosaposin (557 aa).

An N-terminal signal peptide occupies residues methionine 1 to threonine 16. Residues serine 17–lysine 59 constitute a propeptide that is removed on maturation. One can recognise a Saposin A-type 1 domain in the interval proline 18–alanine 58. 4 Saposin B-type domains span residues lysine 59–glutamine 142, asparagine 193–lysine 277, asparagine 313–proline 394, and asparagine 438–tyrosine 519. Intrachain disulfides connect cysteine 63–cysteine 138, cysteine 66–cysteine 132, and cysteine 94–cysteine 106. N-linked (GlcNAc...) asparagine glycosylation is present at asparagine 80. The propeptide occupies glutamate 143–asparagine 193. Cystine bridges form between cysteine 197-cysteine 273, cysteine 200-cysteine 267, and cysteine 229-cysteine 240. A glycan (N-linked (GlcNAc...) asparagine) is linked at asparagine 214. A propeptide spanning residues lysine 277–histidine 312 is cleaved from the precursor. Disulfide bonds link cysteine 317-cysteine 390, cysteine 320-cysteine 384, and cysteine 348-cysteine 359. The N-linked (GlcNAc...) asparagine glycan is linked to asparagine 334. A propeptide spanning residues arginine 393–lysine 437 is cleaved from the precursor. Disulfide bonds link cysteine 442-cysteine 515, cysteine 445-cysteine 509, and cysteine 473-cysteine 484. Asparagine 459 is a glycosylation site (N-linked (GlcNAc...) asparagine). The propeptide occupies lysine 520 to asparagine 557. In terms of domain architecture, Saposin A-type 2 spans leucine 521 to asparagine 557.

As to quaternary structure, saposin-B is a homodimer. Prosaposin exists as a roughly half-half mixture of monomers and disulfide-linked dimers. Monomeric prosaposin interacts (via C-terminus) with sortilin/SORT1, the interaction is required for targeting to lysosomes. Interacts with GRN; facilitates lysosomal delivery of progranulin from the extracellular space and the biosynthetic pathway.

Its subcellular location is the secreted. It is found in the lysosome. In terms of biological role, behaves as a myelinotrophic and neurotrophic factor, these effects are mediated by its G-protein-coupled receptors, GPR37 and GPR37L1, undergoing ligand-mediated internalization followed by ERK phosphorylation signaling. Saposin-A and saposin-C stimulate the hydrolysis of glucosylceramide by beta-glucosylceramidase (EC 3.2.1.45) and galactosylceramide by beta-galactosylceramidase (EC 3.2.1.46). Saposin-C apparently acts by combining with the enzyme and acidic lipid to form an activated complex, rather than by solubilizing the substrate. Its function is as follows. Saposin-B stimulates the hydrolysis of galacto-cerebroside sulfate by arylsulfatase A (EC 3.1.6.8), GM1 gangliosides by beta-galactosidase (EC 3.2.1.23) and globotriaosylceramide by alpha-galactosidase A (EC 3.2.1.22). Saposin-B forms a solubilizing complex with the substrates of the sphingolipid hydrolases. Functionally, saposin-D is a specific sphingomyelin phosphodiesterase activator (EC 3.1.4.12). In terms of biological role, saposins are specific low-molecular mass non-enzymatic proteins, they participate in the lysosomal degradation of sphingolipids, which takes place by the sequential action of specific hydrolases. The polypeptide is Prosaposin (Psap) (Mus musculus (Mouse)).